A 247-amino-acid chain; its full sequence is Cyclin-Q (247 aa).

It belongs to the cyclin family. Cyclin-like FAM58 subfamily.

May be an activating cyclin for the cyclin-associated kinase CDK10. The polypeptide is Cyclin-Q (ccnq) (Danio rerio (Zebrafish)).